Here is a 731-residue protein sequence, read N- to C-terminus: E3 ubiquitin-protein ligase SMURF1 (731 aa).

The region spanning methionine 1 to lysine 120 is the C2 domain. The interval arginine 210 to leucine 235 is disordered. Positions glutamine 221 to aspartate 234 are enriched in polar residues. 2 WW domains span residues glutamine 233 to isoleucine 266 and glycine 279 to leucine 312. The HECT domain occupies arginine 394–glutamate 731. Cysteine 699 serves as the catalytic Glycyl thioester intermediate.

The protein resides in the cytoplasm. Its subcellular location is the cell membrane. It catalyses the reaction S-ubiquitinyl-[E2 ubiquitin-conjugating enzyme]-L-cysteine + [acceptor protein]-L-lysine = [E2 ubiquitin-conjugating enzyme]-L-cysteine + N(6)-ubiquitinyl-[acceptor protein]-L-lysine.. Its pathway is protein modification; protein ubiquitination. E3 ubiquitin-protein ligase that acts as a negative regulator of BMP signaling pathway. Mediates ubiquitination and degradation of smad1 and smad5, 2 receptor-regulated SMADs specific for the BMP pathway. Promotes ubiquitination and subsequent proteasomal degradation of TRAF family members and rhoa. May play a role in dendrite formation by melanocytes. The polypeptide is E3 ubiquitin-protein ligase SMURF1 (smurf1) (Xenopus laevis (African clawed frog)).